Reading from the N-terminus, the 192-residue chain is Thymidylate kinase (192 aa).

7-14 (GIDCVGKS) is a binding site for ATP.

It belongs to the thymidylate kinase family.

The catalysed reaction is dTMP + ATP = dTDP + ADP. Functionally, phosphorylation of dTMP to form dTDP in both de novo and salvage pathways of dTTP synthesis. This Campylobacter jejuni subsp. jejuni serotype O:2 (strain ATCC 700819 / NCTC 11168) protein is Thymidylate kinase (tmk).